The sequence spans 367 residues: UDP-D-xylose:L-fucose alpha-1,3-D-xylosyltransferase (367 aa).

Polar residues predominate over residues 1 to 10 (MAQKQQTLHQ). Residues 1 to 21 (MAQKQQTLHQQRPFSSSPRSY) are disordered. Residues 1–35 (MAQKQQTLHQQRPFSSSPRSYSSISNRPIFLLSRN) lie on the Cytoplasmic side of the membrane. The segment covering 12–21 (RPFSSSPRSY) has biased composition (low complexity). The chain crosses the membrane as a helical; Signal-anchor for type II membrane protein span at residues 36–56 (GLLLVLLALFLLLGVFLPWPG). Topologically, residues 57–367 (SPLLLFPNKV…ALESPLGKLQ (311 aa)) are lumenal. N-linked (GlcNAc...) asparagine glycosylation is found at asparagine 85, asparagine 98, and asparagine 173. Residues 196 to 198 (DVD) carry the DXD motif motif. 2 N-linked (GlcNAc...) asparagine glycosylation sites follow: asparagine 228 and asparagine 292.

This sequence belongs to the glycosyltransferase 77 family. Mn(2+) serves as cofactor. The cofactor is Mg(2+). In terms of processing, glycosylated. In terms of tissue distribution, expressed in roots, rosette leaves, stems and flowers.

It localises to the golgi apparatus membrane. In terms of biological role, catalyzes the transfer of D-xylose from UDP-alpha-D-xylose onto L-fucose. Probably involved in the biosynthesis of rhamnogalacturonan II (RG-II) through xylosylation of the internal fucose moiety of the A-chain of RG-II, a structurally complex pectic polysaccharide of the primary cell wall. RG-II is essential for the cell wall integrity of rapidly growing tissues such as roots and pollen tube growth and elongation. This is UDP-D-xylose:L-fucose alpha-1,3-D-xylosyltransferase from Arabidopsis thaliana (Mouse-ear cress).